The sequence spans 652 residues: Gametogenetin (652 aa).

5 disordered regions span residues 1-39, 52-237, 251-273, 291-473, and 488-576; these read MGNL…MTSQ, PGSA…DSES, PSLA…GGGG, QGPL…GHKE, and LAAD…GAAN. Composition is skewed to basic and acidic residues over residues 18–30 and 124–133; these read QPSD…RRTS and RLLEASHRGQ. Residues 123–486 form an interaction with GGNBP1 region; that stretch reads RRLLEASHRG…APTAAPALPP (364 aa). 2 stretches are compositionally biased toward pro residues: residues 138–149 and 163–178; these read SLRPLKPPPPPR and QFPP…PPLP. The span at 201 to 212 shows a compositional bias: polar residues; that stretch reads ESQAGPRNQGQT. Composition is skewed to low complexity over residues 213–230, 251–267, and 299–312; these read AGRA…GEMA, PSLA…AKAS, and ARPL…AQEA. Residue Ser389 is modified to Phosphoserine. Over residues 407–422 the composition is skewed to low complexity; it reads APALLAPPTFIFPAPT. Composition is skewed to pro residues over residues 428-466 and 495-513; these read RPGP…PPLT and APSP…PVSA. The interactions with ZNF403/GGNBP2 and OAZ3 stretch occupies residues 491–652; sequence DQAPAPSPAP…HYDLQATHSN (162 aa). Positions 523–532 are enriched in basic residues; the sequence is TRTRRNKGSR. A compositionally biased stretch (basic and acidic residues) spans 538–552; the sequence is TRKDGLHGDGPRERA.

As to quaternary structure, interacts with FANCL, GGNBP1 and ZNF403/GGNBP2.

Its function is as follows. May be involved in spermatogenesis. This chain is Gametogenetin (GGN), found in Homo sapiens (Human).